The sequence spans 182 residues: UPF0148 protein VNG_2366C (182 aa).

The interval 1 to 162 (MSNTDDGFDK…RASDADDPRT (162 aa)) is disordered. Composition is skewed to basic and acidic residues over residues 7–33 (GFDK…ETAR) and 47–62 (DHCD…HDGE). Positions 105–122 (PDTSSSTAAATDDVPTAA) are enriched in low complexity. Residues 153-162 (RASDADDPRT) show a composition bias toward basic and acidic residues.

It belongs to the UPF0148 family.

This Halobacterium salinarum (strain ATCC 700922 / JCM 11081 / NRC-1) (Halobacterium halobium) protein is UPF0148 protein VNG_2366C.